The sequence spans 311 residues: Putative methylthioribose-1-phosphate isomerase (311 aa).

Substrate-binding positions include 46 to 48 (RGA), Arg-80, and Gln-174. Catalysis depends on Asp-215, which acts as the Proton donor. Position 224–225 (224–225 (NK)) interacts with substrate.

It belongs to the eIF-2B alpha/beta/delta subunits family. MtnA subfamily.

It catalyses the reaction 5-(methylsulfanyl)-alpha-D-ribose 1-phosphate = 5-(methylsulfanyl)-D-ribulose 1-phosphate. Its function is as follows. Catalyzes the interconversion of methylthioribose-1-phosphate (MTR-1-P) into methylthioribulose-1-phosphate (MTRu-1-P). The protein is Putative methylthioribose-1-phosphate isomerase of Methanothermobacter thermautotrophicus (strain ATCC 29096 / DSM 1053 / JCM 10044 / NBRC 100330 / Delta H) (Methanobacterium thermoautotrophicum).